Here is a 628-residue protein sequence, read N- to C-terminus: Chaperone protein HtpG (628 aa).

Residues 1 to 339 (MSNNQQTLGF…SNDLPLNVSR (339 aa)) are a; substrate-binding. The segment at 340-556 (EILQDNKTTA…NDQMTTQMAK (217 aa)) is b. Residues 557 to 628 (LFAMSGQPVP…IKRVNTLLAG (72 aa)) form a c region.

Belongs to the heat shock protein 90 family. As to quaternary structure, homodimer.

The protein localises to the cytoplasm. Functionally, molecular chaperone. Has ATPase activity. The chain is Chaperone protein HtpG from Actinobacillus succinogenes (strain ATCC 55618 / DSM 22257 / CCUG 43843 / 130Z).